Reading from the N-terminus, the 75-residue chain is High-potential iron-sulfur protein (75 aa).

C38, C41, C54, and C68 together coordinate [4Fe-4S] cluster.

Homodimer. Monomer at different ionic strengths.

Its function is as follows. Specific class of high-redox-potential 4Fe-4S ferredoxins. Functions in anaerobic electron transport in most purple and in some other photosynthetic bacteria and in at least one genus (Paracoccus) of halophilic, denitrifying bacteria. Competent in photosynthetic electron transfer to oxidized cytochrome bc1 complex via the membrane-bound c-type tetraheme. The polypeptide is High-potential iron-sulfur protein (hip) (Rhodoferax fermentans).